Consider the following 255-residue polypeptide: Methylthioribulose-1-phosphate dehydratase (255 aa).

Position 111 (Cys-111) interacts with substrate. Residues His-128 and His-130 each contribute to the Zn(2+) site. Catalysis depends on Glu-157, which acts as the Proton donor/acceptor. A Zn(2+)-binding site is contributed by His-213.

The protein belongs to the aldolase class II family. MtnB subfamily. Zn(2+) is required as a cofactor.

It localises to the cytoplasm. It carries out the reaction 5-(methylsulfanyl)-D-ribulose 1-phosphate = 5-methylsulfanyl-2,3-dioxopentyl phosphate + H2O. The protein operates within amino-acid biosynthesis; L-methionine biosynthesis via salvage pathway; L-methionine from S-methyl-5-thio-alpha-D-ribose 1-phosphate: step 2/6. Functionally, catalyzes the dehydration of methylthioribulose-1-phosphate (MTRu-1-P) into 2,3-diketo-5-methylthiopentyl-1-phosphate (DK-MTP-1-P). This Talaromyces stipitatus (strain ATCC 10500 / CBS 375.48 / QM 6759 / NRRL 1006) (Penicillium stipitatum) protein is Methylthioribulose-1-phosphate dehydratase.